The chain runs to 107 residues: Benzene 1,2-dioxygenase system ferredoxin subunit (107 aa).

In terms of domain architecture, Rieske spans 4-99 (TYILRQSDLP…IKVEGDEVHV (96 aa)). Positions 43, 45, 62, and 65 each coordinate [2Fe-2S] cluster.

This sequence belongs to the bacterial ring-hydroxylating dioxygenase ferredoxin component family. In terms of assembly, this dioxygenase system consists of four proteins: the two subunits of the hydroxylase component (BnzA and BnzB), a ferredoxin (BnzC) and a ferredoxin reductase (BnzD).

It participates in aromatic compound metabolism; benzene degradation; catechol from benzene: step 1/2. Its function is as follows. This protein seems to be a 2Fe-2S ferredoxin. The polypeptide is Benzene 1,2-dioxygenase system ferredoxin subunit (bnzC) (Pseudomonas putida (Arthrobacter siderocapsulatus)).